Reading from the N-terminus, the 655-residue chain is uncharacterized protein (655 aa).

Residues 5-25 (IIIIIFIVINFINIIISSITF) form a helical membrane-spanning segment. 2 disordered regions span residues 337-363 (NSDY…NNNN) and 484-525 (DKIG…SDNS). The segment covering 515–524 (DNNSIGSSDN) has biased composition (low complexity). The chain crosses the membrane as a helical span at residues 588 to 608 (ILAVTISAIGIICVALLLTVV).

The protein resides in the membrane. This is an uncharacterized protein from Dictyostelium discoideum (Social amoeba).